Reading from the N-terminus, the 1482-residue chain is Pregnancy zone protein (1482 aa).

Residues 1-25 (MRKDRLLHLCLVLLLILLSASDSNS) form the signal peptide. N-linked (GlcNAc...) asparagine glycosylation is found at asparagine 54, asparagine 69, asparagine 246, asparagine 392, and asparagine 406. The bait region stretch occupies residues 685 to 735 (CSVIPSVSAGAVGQGYYGAGLGVVERPYVPQLGTYNVIPLNNEQSSGPVPE). Residues asparagine 753, asparagine 875, and asparagine 932 are each glycosylated (N-linked (GlcNAc...) asparagine). The isoglutamyl cysteine thioester (Cys-Gln) cross-link spans 978–981 (CGEQ). N-linked (GlcNAc...) asparagine glycosylation is found at asparagine 997 and asparagine 1430.

The protein belongs to the protease inhibitor I39 (alpha-2-macroglobulin) family. As to quaternary structure, homotetramer, which consists of two pairs of disulfide-linked chains. In terms of tissue distribution, plasma. Prominent constituent of late-pregnancy sera.

It localises to the secreted. Its function is as follows. Is able to inhibit all four classes of proteinases by a unique 'trapping' mechanism. This protein has a peptide stretch, called the 'bait region' which contains specific cleavage sites for different proteinases. When a proteinase cleaves the bait region, a conformational change is induced in the protein which traps the proteinase. The entrapped enzyme remains active against low molecular weight substrates (activity against high molecular weight substrates is greatly reduced). Following cleavage in the bait region a thioester bond is hydrolyzed and mediates the covalent binding of the protein to the proteinase. This chain is Pregnancy zone protein (PZP), found in Homo sapiens (Human).